Here is a 160-residue protein sequence, read N- to C-terminus: Photosystem II extrinsic protein V (160 aa).

Positions 1 to 25 (MKRFILLAIATVFFFCQFQTNPVNA) are cleaved as a signal peptide. Heme c-binding residues include C62, C65, H66, and H117.

This sequence belongs to the cytochrome c family. PsbV subfamily. As to quaternary structure, PSII is composed of 1 copy each of membrane proteins PsbA, PsbB, PsbC, PsbD, PsbE, PsbF, PsbH, PsbI, PsbJ, PsbK, PsbL, PsbM, PsbT, PsbX, PsbY, PsbZ, Psb30/Ycf12, peripheral proteins PsbO, CyanoQ (PsbQ), PsbU, PsbV and a large number of cofactors. It forms dimeric complexes. Requires heme c as cofactor.

Its subcellular location is the cellular thylakoid membrane. In terms of biological role, one of the extrinsic, lumenal subunits of photosystem II (PSII). PSII is a light-driven water plastoquinone oxidoreductase, using light energy to abstract electrons from H(2)O, generating a proton gradient subsequently used for ATP formation. The extrinsic proteins stabilize the structure of photosystem II oxygen-evolving complex (OEC), the ion environment of oxygen evolution and protect the OEC against heat-induced inactivation. Low-potential cytochrome c that plays a role in the OEC of PSII. This chain is Photosystem II extrinsic protein V, found in Rippkaea orientalis (strain PCC 8801 / RF-1) (Cyanothece sp. (strain PCC 8801)).